We begin with the raw amino-acid sequence, 389 residues long: Lipid-A-disaccharide synthase (389 aa).

This sequence belongs to the LpxB family.

The catalysed reaction is a lipid X + a UDP-2-N,3-O-bis[(3R)-3-hydroxyacyl]-alpha-D-glucosamine = a lipid A disaccharide + UDP + H(+). The protein operates within bacterial outer membrane biogenesis; LPS lipid A biosynthesis. Functionally, condensation of UDP-2,3-diacylglucosamine and 2,3-diacylglucosamine-1-phosphate to form lipid A disaccharide, a precursor of lipid A, a phosphorylated glycolipid that anchors the lipopolysaccharide to the outer membrane of the cell. The polypeptide is Lipid-A-disaccharide synthase (Paraburkholderia phytofirmans (strain DSM 17436 / LMG 22146 / PsJN) (Burkholderia phytofirmans)).